The chain runs to 310 residues: MSADFRHEPVLANEILELLRPRPGELFLDGTLGGGGHSGLLLEAGARVIALDKDPRALAAATARLARFGEAFRAVRSDFRDAKNVLQALGIAAVDGALVDLGVSSPQLDEAERGFSFSRPGPLDMRMGDTGETLEDLLRRIDERELARILREYGEEPFARPVARAVKAALETEAPLDTARLAEVVAGAIPRKAWPHRIHPATRTFQALRIAVNDELGALAAWLDGLPGVLAPGGRAAAISFHSLEDRMVKEKFRALTQACTCPPDLPVCACGAKASFAAITRKAVKASDEEIARNPRARSARLRAVEKLR.

S-adenosyl-L-methionine-binding positions include 35 to 37, Asp52, Phe79, Asp100, and Gln107; that span reads GGH.

This sequence belongs to the methyltransferase superfamily. RsmH family.

The protein localises to the cytoplasm. It catalyses the reaction cytidine(1402) in 16S rRNA + S-adenosyl-L-methionine = N(4)-methylcytidine(1402) in 16S rRNA + S-adenosyl-L-homocysteine + H(+). Specifically methylates the N4 position of cytidine in position 1402 (C1402) of 16S rRNA. This is Ribosomal RNA small subunit methyltransferase H from Anaeromyxobacter sp. (strain K).